The chain runs to 730 residues: uncharacterized protein (730 aa).

A phosphoserine mark is found at S82 and S89. 2 disordered regions span residues 82-114 (SPVR…TGSY) and 447-468 (NTNH…SKNE). Residues 89-98 (SIQPSNSGKN) show a composition bias toward polar residues. Positions 449 to 460 (NHNFTTNNNNEN) are enriched in low complexity. 2 positions are modified to phosphoserine: S483 and S651.

This is an uncharacterized protein from Saccharomyces cerevisiae (strain ATCC 204508 / S288c) (Baker's yeast).